The chain runs to 225 residues: Ras-related protein Rab-21 (225 aa).

Ala2 carries the N-acetylalanine modification. GTP-binding residues include Gly28, Gly31, Lys32, Thr33, Ser34, Asn45, Asp46, His48, Thr50, and Thr51. Thr33 is a Mg(2+) binding site. Positions 43 to 56 match the Switch 1 motif; it reads KFNDKHITTLQASF. Positions 51 and 74 each coordinate Mg(2+). A Switch 2 motif is present at residues 76–94; that stretch reads AGQERFHALGPIYYRDSNG. 6 residues coordinate GTP: Gly77, Asn132, Lys133, Asp135, Ala163, and Lys164. Positions 188–225 are disordered; that stretch reads ERAKGNGSSQPGTARRGVQIIDDEPQAQTSGGGCCSSG. Residues Cys221 and Cys222 are each lipidated (S-geranylgeranyl cysteine). Cys222 carries the post-translational modification Cysteine methyl ester. Residues 223–225 constitute a propeptide, removed in mature form; the sequence is SSG.

It belongs to the small GTPase superfamily. Rab family. In terms of assembly, interacts with the cytoplasmic tail of integrins ITGA1, ITGA2, ITGA5, ITGA6, ITGA11 and ITGB1. Interacts with RABGEF1 (via VPS9 domain). Interacts with ANKRD27. Interacts with VAMP7. Interacts (in GTP-bound form) with VAMP8 in response to starvation; the interaction probably regulates VAMP8 endolysosomal trafficking. Interacts (active GTP-bound form) with TMED10; the interaction is indirect and regulates TMED10 abundance and localization at the Golgi. Requires Mg(2+) as cofactor. Widely expressed. In jejunal tissue, predominantly expressed in the apical region of the epithelial cell layer of the villi, weak expression, if any, in the crypt epithelium. Capillary endothelium and some cell types in the lamina propria also show expression.

It localises to the endoplasmic reticulum membrane. The protein resides in the golgi apparatus. It is found in the trans-Golgi network. The protein localises to the golgi apparatus membrane. Its subcellular location is the early endosome membrane. It localises to the cytoplasmic vesicle membrane. The protein resides in the cleavage furrow. It is found in the cell projection. The protein localises to the neuron projection. The enzyme catalyses GTP + H2O = GDP + phosphate + H(+). Its activity is regulated as follows. Regulated by guanine nucleotide exchange factors (GEFs) including ANKRD27 and RABGEF1, which promote the exchange of bound GDP for free GTP. Regulated by GTPase activating proteins (GAPs) which increase the GTP hydrolysis activity. Inhibited by GDP dissociation inhibitors (GDIs). In terms of biological role, the small GTPases Rab are key regulators of intracellular membrane trafficking, from the formation of transport vesicles to their fusion with membranes. Rabs cycle between an inactive GDP-bound form and an active GTP-bound form that is able to recruit to membranes different sets of downstream effectors directly responsible for vesicle formation, movement, tethering and fusion. RAB21 is involved in membrane trafficking control. During the mitosis of adherent cells, controls the endosomal trafficking of integrins which is required for the successful completion of cytokinesis. Regulates integrin internalization and recycling, but does not influence the traffic of endosomally translocated receptors in general. As a result, may regulate cell adhesion and migration. Involved in neurite growth. Following SBF2/MTMT13-mediated activation in response to starvation-induced autophagy, binds to and regulates SNARE protein VAMP8 endolysosomal transport required for SNARE-mediated autophagosome-lysosome fusion. Modulates protein levels of the cargo receptors TMED2 and TMED10, and required for appropriate Golgi localization of TMED10. The chain is Ras-related protein Rab-21 from Homo sapiens (Human).